The primary structure comprises 707 residues: ATP-dependent RNA helicase DHX33 (707 aa).

The interval 1–64 (MPEEAGFPPA…LAQPSASPYP (64 aa)) is disordered. Positions 1-80 (MPEEAGFPPA…RRSLPIFQAR (80 aa)) are required for nucleolar location. Residues 39 to 49 (GSGGRGGGGGR) show a composition bias toward gly residues. Residues 50-64 (RQQPPLAQPSASPYP) are compositionally biased toward low complexity. Residues 84–252 (LAQLRNLDNA…FNGAPVLYLE (169 aa)) form the Helicase ATP-binding domain. Residue 97-104 (GETGSGKT) coordinates ATP. Positions 194–197 (DEAH) match the DEAH box motif. In terms of domain architecture, Helicase C-terminal spans 277–450 (SVFQIHQEAP…SVMLQLLAMK (174 aa)). Residues 471-562 (AIAQLDLLGA…ISSEGDHMTL (92 aa)) are HA2; required for interaction with EIF3G and RPL26. The Critical for rDNA-binding motif lies at 547–558 (GVRKKFISSEGD).

Belongs to the DEAD box helicase family. DEAH subfamily. In terms of assembly, interacts with UBTF. Interacts with DDX3X, EIF3G and EIF3H; the interaction is independent of RNA. Interacts (via HA2 region and Helicase C-terminal domain) with the components of the large ribosomal subunit RPL3, RPL7, RPL26 and RPL27. Interacts (via DEAH box) with NLRP3 (via NACHT domain). Binds to mRNA. Binds to double-stranded RNA (via the helicase C-terminal domain). Interacts (via the helicase C-terminal domain) with MAVS. Ubiquitinated, leading to its degradation by the proteasome. Deubiquitinated by USP36.

It is found in the nucleus. The protein localises to the nucleolus. The protein resides in the nucleoplasm. It localises to the cytoplasm. Its subcellular location is the inflammasome. It catalyses the reaction ATP + H2O = ADP + phosphate + H(+). Functionally, implicated in nucleolar organization, ribosome biogenesis, protein synthesis and cytoplasmic dsRNA sensing. Stimulates RNA polymerase I transcription of the 47S precursor rRNA. Associates with ribosomal DNA (rDNA) loci where it is involved in POLR1A recruitment. In the cytoplasm, promotes elongation-competent 80S ribosome assembly at the late stage of mRNA translation initiation. Senses cytosolic dsRNA mediating NLRP3 inflammasome formation in macrophages and type I interferon production in myeloid dendritic cells. Required for NLRP3 activation induced by viral dsRNA and bacterial RNA. In dendritic cells, required for induction of type I interferon production induced by cytoplasmic dsRNA via the activation of MAPK and NF-kappa-B signaling pathways. The chain is ATP-dependent RNA helicase DHX33 from Homo sapiens (Human).